A 365-amino-acid chain; its full sequence is Homeobox protein Nkx-6.1 (365 aa).

The interval 35–136 (LYPAAYPPLP…SSSSASATSA (102 aa)) is disordered. 3 stretches are compositionally biased toward low complexity: residues 48–59 (PSSSSSSSSSSS), 69–92 (PGGL…QLSA), and 110–136 (ASGA…ATSA). The interval 102-269 (LSRPSMPVAS…KYLAGPERAR (168 aa)) is repressor domain. Position 190 is an asymmetric dimethylarginine (Arg190). The homeobox DNA-binding region spans 237 to 296 (RKHTRPTFSGQQIFALEKTFEQTKYLAGPERARLAYSLGMTESQVKVWFQNRRTKWRKKH). A disordered region spans residues 295 to 365 (KHAAEMATAK…LHASEAEGSS (71 aa)). Positions 305–318 (KKQDSETERLKGTS) are enriched in basic and acidic residues. The segment at 307 to 365 (QDSETERLKGTSENEEDDDDYNKPLDPNSDDEKITQLLKKHKSSGGSLLLHASEAEGSS) is involved in DNA-binding.

In terms of tissue distribution, pancreatic beta cells.

Its subcellular location is the nucleus. In terms of biological role, transcription factor which binds to specific A/T-rich DNA sequences in the promoter regions of a number of genes. Involved in the development of insulin-producing beta cells in the islets of Langerhans at the secondary transition. Together with NKX2-2 and IRX3 acts to restrict the generation of motor neurons to the appropriate region of the neural tube. Belongs to the class II proteins of neuronal progenitor factors, which are induced by SHH signals. This is Homeobox protein Nkx-6.1 (Nkx6-1) from Rattus norvegicus (Rat).